The sequence spans 322 residues: Putative ankyrin repeat protein L897 (322 aa).

ANK repeat units follow at residues 88 to 117 (DNEY…SYDM), 181 to 210 (NIID…FWAN), and 248 to 277 (NKNE…QTDH).

In Acanthamoeba polyphaga (Amoeba), this protein is Putative ankyrin repeat protein L897.